Here is a 358-residue protein sequence, read N- to C-terminus: MITGKTISLPLSVIACLGAGASQAAACANQTDCLKSASAKVSQTLTPKVVPVFGDYPKLYIHDSAANEDYTVPDTTKQEFDFYTNKTSFNLPRRSSIETREIASISPAMGFTVLLVEKTRDNTVSNGGSTLSLLSSNSNDAYLSFALGAKPSSSGQKWSFAKSLLQGNKAQTAYWQKPWDMNLLGPTGDFSGTEWIYYTFTPDGKVRIDRFAPYTYFLAFTAYQWDEAVLDGGFPHFPFDTGTPTNRPQSVTFGSVGPWLIGAAGAPGQTPPTSEPIEALPGFEGATIFSAPLSMKEVIAYQNSLRGSYFLDVDMLPCNSGQYLSGRISTPCGTGSPGNPPPNINSVAQHRISTNTNR.

The N-terminal stretch at Met1–Ala15 is a signal peptide. Residue Cys16 is the site of N-palmitoyl cysteine attachment. Cys16 carries S-diacylglycerol cysteine lipidation. A disordered region spans residues Pro331–Arg358. Residues Val347 to Arg358 are compositionally biased toward polar residues.

Its subcellular location is the cell membrane. This is an uncharacterized protein from Sinorhizobium fredii (strain NBRC 101917 / NGR234).